The chain runs to 1086 residues: MGNAGSMDSQQTDFRAHNVPLKLPMPEPGELEERFAIVLNAMNLPPDKARLLRQYDNEKKWELICDQERFQVKNPPHTYIQKLKGYLDPAVTRKKFRRRVQESTQVLRELEISLRTNHIGWVREFLNEENKGLDVLVEYLSFAQYAVTFDFESVESTVESSVDKSKPWSRSIEDLHRGSNLPSPVGNSVSRSGRHSALRYNTLPSRRTLKNSRLVSKKDDVHVCIMCLRAIMNYQYGFNMVMSHPHAVNEIALSLNNKNPRTKALVLELLAAVCLVRGGHEIILSAFDNFKEVCGEKQRFEKLMEHFRNEDNNIDFMVASMQFINIVVHSVEDMNFRVHLQYEFTKLGLDEYLDKLKHTESDKLQVQIQAYLDNVFDVGALLEDAETKNAALERVEELEENISHLSEKLQDTENEAMSKIVELEKQLMQRNKELDVVREIYKDANTQVHTLRKMVKEKEEAIQRQSTLEKKIHELEKQGTIKIQKKGDGDIAILPVVASGTLSMGSEVVAGNSVGPTMGAASSGPLPPPPPPLPPSSDTPETVQNGPVTPPMPPPPPPPPPPPPPPPPPPPPPLPGPAAETVPAPPLAPPLPSAPPLPGTSSPTVVFNSGLAAVKIKKPIKTKFRMPVFNWVALKPNQINGTVFNEIDDERILEDLNVDEFEEIFKTKAQGPAIDLSSSKQKIPQKGSNKVTLLEANRAKNLAITLRKAGKTADEICKAIHVFDLKTLPVDFVECLMRFLPTENEVKVLRLYERERKPLENLSDEDRFMMQFSKIERLMQKMTIMAFIGNFAESIQMLTPQLHAIIAASVSIKSSQKLKKILEIILALGNYMNSSKRGAVYGFKLQSLDLLLDTKSTDRKQTLLHYISNVVKEKYHQVSLFYNELHYVEKAAAVSLENVLLDVKELQRGMDLTKREYTMHDHNTLLKEFILNNEGKLKKLQDDAKIAQDAFDDVVKYFGENPKTTPPSVFFPVFVRFVKAYKQAEEENELRKKQEQALMEKLLEQEALMEQQDPKSPSHKSKRQQQELIAELRRRQVKDNRHVYEGKDGAIEDIITVLKTVPFTARTAKRGSRFFCEPVLTEEYHY.

The N-myristoyl glycine moiety is linked to residue G2. The GBD/FH3 domain maps to 23–469; the sequence is LPMPEPGELE…EAIQRQSTLE (447 aa). The residue at position 188 (S188) is a Phosphoserine. The interval 513 to 597 is disordered; it reads SVGPTMGAAS…APPLPSAPPL (85 aa). Positions 525–537 are enriched in pro residues; sequence PLPPPPPPLPPSS. Over residues 538–547 the composition is skewed to polar residues; it reads DTPETVQNGP. 2 stretches are compositionally biased toward pro residues: residues 548–576 and 583–597; these read VTPP…PLPG and PAPP…APPL. The region spanning 616-1007 is the FH2 domain; sequence IKKPIKTKFR…LMEKLLEQEA (392 aa). The 40-residue stretch at 1040–1079 folds into the DAD domain; it reads NRHVYEGKDGAIEDIITVLKTVPFTARTAKRGSRFFCEPV.

It belongs to the formin homology family.

The protein localises to the cytoplasm. In terms of biological role, plays a role in the regulation of cell morphology and cytoskeletal organization. Required in the cortical actin filament dynamics. This Homo sapiens (Human) protein is Formin-like protein 2.